Consider the following 564-residue polypeptide: DNA ligase B (564 aa).

Lys-130 acts as the N6-AMP-lysine intermediate in catalysis.

Belongs to the NAD-dependent DNA ligase family. LigB subfamily.

The catalysed reaction is NAD(+) + (deoxyribonucleotide)n-3'-hydroxyl + 5'-phospho-(deoxyribonucleotide)m = (deoxyribonucleotide)n+m + AMP + beta-nicotinamide D-nucleotide.. Its function is as follows. Catalyzes the formation of phosphodiester linkages between 5'-phosphoryl and 3'-hydroxyl groups in double-stranded DNA using NAD as a coenzyme and as the energy source for the reaction. The chain is DNA ligase B from Klebsiella pneumoniae subsp. pneumoniae (strain ATCC 700721 / MGH 78578).